Reading from the N-terminus, the 274-residue chain is 3-methyl-2-oxobutanoate hydroxymethyltransferase (274 aa).

Residues Asp-44 and Asp-83 each contribute to the Mg(2+) site. Residues Asp-44–Ser-45, Asp-83, and Lys-113 contribute to the 3-methyl-2-oxobutanoate site. Residue Glu-115 coordinates Mg(2+). Residue Glu-182 is the Proton acceptor of the active site.

Belongs to the PanB family. As to quaternary structure, homodecamer; pentamer of dimers. The cofactor is Mg(2+).

It is found in the cytoplasm. It carries out the reaction 3-methyl-2-oxobutanoate + (6R)-5,10-methylene-5,6,7,8-tetrahydrofolate + H2O = 2-dehydropantoate + (6S)-5,6,7,8-tetrahydrofolate. It participates in cofactor biosynthesis; (R)-pantothenate biosynthesis; (R)-pantoate from 3-methyl-2-oxobutanoate: step 1/2. Functionally, catalyzes the reversible reaction in which hydroxymethyl group from 5,10-methylenetetrahydrofolate is transferred onto alpha-ketoisovalerate to form ketopantoate. This is 3-methyl-2-oxobutanoate hydroxymethyltransferase from Campylobacter jejuni subsp. jejuni serotype O:23/36 (strain 81-176).